The following is a 410-amino-acid chain: Acetate kinase (410 aa).

A Mg(2+)-binding site is contributed by Asn-7. Lys-14 is a binding site for ATP. Arg-88 is a substrate binding site. The active-site Proton donor/acceptor is Asp-145. ATP contacts are provided by residues 203–207, 278–280, and 326–330; these read HAGNG, DTR, and GIGEN. Glu-379 is a Mg(2+) binding site.

The protein belongs to the acetokinase family. Homodimer. It depends on Mg(2+) as a cofactor. Mn(2+) is required as a cofactor.

The protein localises to the cytoplasm. It catalyses the reaction acetate + ATP = acetyl phosphate + ADP. The protein operates within metabolic intermediate biosynthesis; acetyl-CoA biosynthesis; acetyl-CoA from acetate: step 1/2. In terms of biological role, catalyzes the formation of acetyl phosphate from acetate and ATP. Can also catalyze the reverse reaction. This Onion yellows phytoplasma (strain OY-M) protein is Acetate kinase.